Reading from the N-terminus, the 127-residue chain is Large ribosomal subunit protein bL17 (127 aa).

It belongs to the bacterial ribosomal protein bL17 family. In terms of assembly, part of the 50S ribosomal subunit. Contacts protein L32.

The sequence is that of Large ribosomal subunit protein bL17 from Haemophilus ducreyi (strain 35000HP / ATCC 700724).